A 265-amino-acid chain; its full sequence is Phosphatidylglycerol--prolipoprotein diacylglyceryl transferase (265 aa).

The next 4 helical transmembrane spans lie at 10 to 30 (VAIA…LIGI), 56 to 76 (LVFW…VLFY), 87 to 107 (LILQ…GVLL), and 117 to 137 (GKGF…GLGA). Arg139 contacts a 1,2-diacyl-sn-glycero-3-phospho-(1'-sn-glycerol). 3 helical membrane passes run 172 to 192 (PSQL…LWFY), 200 to 220 (MAVS…VEFV), and 227 to 247 (LGYL…PMIL).

Belongs to the Lgt family.

The protein localises to the cell inner membrane. The enzyme catalyses L-cysteinyl-[prolipoprotein] + a 1,2-diacyl-sn-glycero-3-phospho-(1'-sn-glycerol) = an S-1,2-diacyl-sn-glyceryl-L-cysteinyl-[prolipoprotein] + sn-glycerol 1-phosphate + H(+). The protein operates within protein modification; lipoprotein biosynthesis (diacylglyceryl transfer). In terms of biological role, catalyzes the transfer of the diacylglyceryl group from phosphatidylglycerol to the sulfhydryl group of the N-terminal cysteine of a prolipoprotein, the first step in the formation of mature lipoproteins. This Azotobacter vinelandii (strain DJ / ATCC BAA-1303) protein is Phosphatidylglycerol--prolipoprotein diacylglyceryl transferase.